Here is a 321-residue protein sequence, read N- to C-terminus: Nucleus-vacuole junction protein 1 (321 aa).

Residues 1–22 form the signal peptide; it reads MTRPPLVRGIFSLGLSVAVLKG. Positions 73–125 are TSC13-binding; sequence ELSWRKVFNFISRQSSELDARIYVLILLLSFLLPIAWTVLDGDRETTLEDKDN. Residues 94 to 114 form a helical membrane-spanning segment; sequence IYVLILLLSFLLPIAWTVLDG. The tract at residues 139–195 is OSH1-binding; the sequence is KHYNDGERAVLQFGKNRSEPIILSYKDMNVLEGEHEFTSKEEHSNSHLTSKSENALS. Position 156 is a phosphoserine (Ser-156). The segment covering 174–183 has biased composition (basic and acidic residues); the sequence is EFTSKEEHSN. The disordered stretch occupies residues 174 to 194; sequence EFTSKEEHSNSHLTSKSENAL. Residues 184–194 are compositionally biased toward polar residues; sequence SHLTSKSENAL. Position 199 is a phosphoserine (Ser-199). The disordered stretch occupies residues 210 to 275; that stretch reads QLEEDKNEPN…SLKSSTSFPI (66 aa). The interval 233–321 is VAC8-binding; sequence DCSSSSEVES…EQAYSQPFRY (89 aa). The span at 242 to 262 shows a compositional bias: basic and acidic residues; that stretch reads SQSKCRKESTAEPDSLSRDTR. Over residues 263–272 the composition is skewed to low complexity; that stretch reads TTSSLKSSTS. Ser-285 and Ser-298 each carry phosphoserine. The interval 299-321 is disordered; the sequence is PTKSSNLDAQVNTEQAYSQPFRY.

In terms of assembly, interacts with OSH1, TSC13 and VAC8.

Its subcellular location is the nucleus outer membrane. In terms of biological role, involved in the formation of nucleus-vacuole (NV) junctions during piecemeal microautophagy of the nucleus (PMN). NV junctions are interorganelle interfaces mediated by NVJ1 in the nuclear envelope and VAC8 on the vacuole membrane. Together, NVJ1 and VAC8 form Velcro-like patches through which teardrop-like portions of the nucleus are pinched off into the vacuolar lumen and degraded by the PMN process. Also acts as an outer-nuclear membrane receptor for OSH1 and TSC13. This Saccharomyces cerevisiae (strain YJM789) (Baker's yeast) protein is Nucleus-vacuole junction protein 1 (NVJ1).